A 449-amino-acid chain; its full sequence is Chromosomal replication initiator protein DnaA (449 aa).

The interval 1 to 72 is domain I, interacts with DnaA modulators; it reads MENIHDLWER…SETIDDLTGV (72 aa). The interval 72–111 is domain II; that stretch reads VRLYPKFVIPTSQLDEPFVEQELKKPMKQPPAQNGEMPNN. Residues 112–328 form a domain III, AAA+ region region; that stretch reads MLNDKYTFDT…GALIRVVAYS (217 aa). ATP-binding residues include Gly-156, Gly-158, Lys-159, and Thr-160. Residues 329 to 449 are domain IV, binds dsDNA; that stretch reads SLINQDMNAD…IQDISDKLRS (121 aa).

This sequence belongs to the DnaA family. As to quaternary structure, oligomerizes as a right-handed, spiral filament on DNA at oriC.

The protein localises to the cytoplasm. In terms of biological role, plays an essential role in the initiation and regulation of chromosomal replication. ATP-DnaA binds to the origin of replication (oriC) to initiate formation of the DNA replication initiation complex once per cell cycle. Binds the DnaA box (a 9 base pair repeat at the origin) and separates the double-stranded (ds)DNA. Forms a right-handed helical filament on oriC DNA; dsDNA binds to the exterior of the filament while single-stranded (ss)DNA is stabiized in the filament's interior. The ATP-DnaA-oriC complex binds and stabilizes one strand of the AT-rich DNA unwinding element (DUE), permitting loading of DNA polymerase. After initiation quickly degrades to an ADP-DnaA complex that is not apt for DNA replication. Binds acidic phospholipids. This chain is Chromosomal replication initiator protein DnaA, found in Halalkalibacterium halodurans (strain ATCC BAA-125 / DSM 18197 / FERM 7344 / JCM 9153 / C-125) (Bacillus halodurans).